The following is a 338-amino-acid chain: Ketol-acid reductoisomerase (NADP(+)) (338 aa).

The KARI N-terminal Rossmann domain maps to 1–181 (MQVYYDKDCD…GGGRTGIIET (181 aa)). Residues 24 to 27 (FGSQ), arginine 47, serine 50, serine 52, and 82 to 85 (DEFQ) each bind NADP(+). Histidine 107 is an active-site residue. Glycine 133 contributes to the NADP(+) binding site. In terms of domain architecture, KARI C-terminal knotted spans 182–327 (TFKDETETDL…EKLRSMMPWI (146 aa)). Residues aspartate 190, glutamate 194, glutamate 226, and glutamate 230 each coordinate Mg(2+). Serine 251 serves as a coordination point for substrate.

The protein belongs to the ketol-acid reductoisomerase family. Mg(2+) serves as cofactor.

The catalysed reaction is (2R)-2,3-dihydroxy-3-methylbutanoate + NADP(+) = (2S)-2-acetolactate + NADPH + H(+). The enzyme catalyses (2R,3R)-2,3-dihydroxy-3-methylpentanoate + NADP(+) = (S)-2-ethyl-2-hydroxy-3-oxobutanoate + NADPH + H(+). It participates in amino-acid biosynthesis; L-isoleucine biosynthesis; L-isoleucine from 2-oxobutanoate: step 2/4. The protein operates within amino-acid biosynthesis; L-valine biosynthesis; L-valine from pyruvate: step 2/4. Its function is as follows. Involved in the biosynthesis of branched-chain amino acids (BCAA). Catalyzes an alkyl-migration followed by a ketol-acid reduction of (S)-2-acetolactate (S2AL) to yield (R)-2,3-dihydroxy-isovalerate. In the isomerase reaction, S2AL is rearranged via a Mg-dependent methyl migration to produce 3-hydroxy-3-methyl-2-ketobutyrate (HMKB). In the reductase reaction, this 2-ketoacid undergoes a metal-dependent reduction by NADPH to yield (R)-2,3-dihydroxy-isovalerate. The chain is Ketol-acid reductoisomerase (NADP(+)) from Marinobacter nauticus (strain ATCC 700491 / DSM 11845 / VT8) (Marinobacter aquaeolei).